The sequence spans 529 residues: Beta-galactoside alpha-2,6-sialyltransferase 2 (529 aa).

Topologically, residues 1–11 are cytoplasmic; it reads MKPHLKQWRQR. Residues 12–32 form a helical; Signal-anchor for type II membrane protein membrane-spanning segment; the sequence is MLFGLFAGGLLFLLIFIYFTD. The Lumenal segment spans residues 33 to 529; it reads SNPAEPVPSS…PAPSPVIPHS (497 aa). Residues 142-186 form a disordered region; the sequence is SHSQGTLGFPSPGEPGPREGAFPAAQVQRRRVKKRHRRQRRSHVL. Basic residues predominate over residues 169 to 183; that stretch reads QRRRVKKRHRRQRRS. Asn211 is a glycosylation site (N-linked (GlcNAc...) asparagine). Disulfide bonds link Cys253/Cys519, Cys296/Cys448, and Cys466/Cys477.

It belongs to the glycosyltransferase 29 family.

It is found in the golgi apparatus. It localises to the golgi stack membrane. The catalysed reaction is a beta-D-galactoside + CMP-N-acetyl-beta-neuraminate = an N-acetyl-alpha-neuraminyl-(2-&gt;6)-beta-D-galactosyl derivative + CMP + H(+). Functionally, transfers sialic acid from the donor of substrate CMP-sialic acid to galactose containing acceptor substrates. Has alpha-2,6-sialyltransferase activity toward oligosaccharides that have the Gal-beta-1,4-GlcNAc sequence at the non-reducing end of their carbohydrate groups, but it has weak or no activities toward glycoproteins and glycolipids. This is Beta-galactoside alpha-2,6-sialyltransferase 2 (ST6GAL2) from Pan troglodytes (Chimpanzee).